The primary structure comprises 360 residues: MTERDPIPTRHATRWLLQCRPGFGADLAAELAAWSSDAGVAGWPRVENDQGRVDFHSADGRPLPTPPALTFARQAWPVVADCPQLPERDRVGALLEALAPHLPEALAGVWLEHPDTNDGKALGRFCRKFRPHLERALRERGVALERAGAPRLHLWFADSRQVVAGLAPAGSGRPWPMGIPRLRLPRAAPSRSALKLEEAVGWLLTPVEREAALRPGMSAVDLGAAPGGWTWVLRQAGLHVTAVDNGPLAESLRADRAVRHLREDGFRYRPPHRVDWLVCDMVEQPHRVARLVRHWLVSGWCGRALFNLKLPMRRRWQCVAECRALVTGGSGELGWRSAQLYHDREEITVLAWRPAAGSRG.

Residues S192, 225–228 (APGG), D244, D264, and D280 each bind S-adenosyl-L-methionine. Residue K309 is the Proton acceptor of the active site.

Belongs to the class I-like SAM-binding methyltransferase superfamily. RNA methyltransferase RlmE family. RlmM subfamily. Monomer.

It is found in the cytoplasm. The enzyme catalyses cytidine(2498) in 23S rRNA + S-adenosyl-L-methionine = 2'-O-methylcytidine(2498) in 23S rRNA + S-adenosyl-L-homocysteine + H(+). Catalyzes the 2'-O-methylation at nucleotide C2498 in 23S rRNA. The protein is Ribosomal RNA large subunit methyltransferase M of Alkalilimnicola ehrlichii (strain ATCC BAA-1101 / DSM 17681 / MLHE-1).